Reading from the N-terminus, the 494-residue chain is Aspartyl/glutamyl-tRNA(Asn/Gln) amidotransferase subunit B (494 aa).

Belongs to the GatB/GatE family. GatB subfamily. Heterotrimer of A, B and C subunits.

The enzyme catalyses L-glutamyl-tRNA(Gln) + L-glutamine + ATP + H2O = L-glutaminyl-tRNA(Gln) + L-glutamate + ADP + phosphate + H(+). The catalysed reaction is L-aspartyl-tRNA(Asn) + L-glutamine + ATP + H2O = L-asparaginyl-tRNA(Asn) + L-glutamate + ADP + phosphate + 2 H(+). Functionally, allows the formation of correctly charged Asn-tRNA(Asn) or Gln-tRNA(Gln) through the transamidation of misacylated Asp-tRNA(Asn) or Glu-tRNA(Gln) in organisms which lack either or both of asparaginyl-tRNA or glutaminyl-tRNA synthetases. The reaction takes place in the presence of glutamine and ATP through an activated phospho-Asp-tRNA(Asn) or phospho-Glu-tRNA(Gln). This Nitrobacter winogradskyi (strain ATCC 25391 / DSM 10237 / CIP 104748 / NCIMB 11846 / Nb-255) protein is Aspartyl/glutamyl-tRNA(Asn/Gln) amidotransferase subunit B.